We begin with the raw amino-acid sequence, 272 residues long: Phosphatidylglycerol--prolipoprotein diacylglyceryl transferase (272 aa).

3 helical membrane passes run I19–V39, L58–Y78, and W94–F114. R141 serves as a coordination point for a 1,2-diacyl-sn-glycero-3-phospho-(1'-sn-glycerol). Transmembrane regions (helical) follow at residues G207–F227 and L234–C254.

It belongs to the Lgt family.

The protein localises to the cell inner membrane. It carries out the reaction L-cysteinyl-[prolipoprotein] + a 1,2-diacyl-sn-glycero-3-phospho-(1'-sn-glycerol) = an S-1,2-diacyl-sn-glyceryl-L-cysteinyl-[prolipoprotein] + sn-glycerol 1-phosphate + H(+). The protein operates within protein modification; lipoprotein biosynthesis (diacylglyceryl transfer). Its function is as follows. Catalyzes the transfer of the diacylglyceryl group from phosphatidylglycerol to the sulfhydryl group of the N-terminal cysteine of a prolipoprotein, the first step in the formation of mature lipoproteins. This Desulfotalea psychrophila (strain LSv54 / DSM 12343) protein is Phosphatidylglycerol--prolipoprotein diacylglyceryl transferase.